The sequence spans 629 residues: tRNA uridine 5-carboxymethylaminomethyl modification enzyme MnmG (629 aa).

FAD contacts are provided by residues 13–18, valine 125, and serine 180; that span reads GGGHAG. An NAD(+)-binding site is contributed by 273–287; that stretch reads GPRYCPSIEDKVMRF. Glutamine 370 contributes to the FAD binding site.

It belongs to the MnmG family. Homodimer. Heterotetramer of two MnmE and two MnmG subunits. FAD is required as a cofactor.

It is found in the cytoplasm. In terms of biological role, NAD-binding protein involved in the addition of a carboxymethylaminomethyl (cmnm) group at the wobble position (U34) of certain tRNAs, forming tRNA-cmnm(5)s(2)U34. This chain is tRNA uridine 5-carboxymethylaminomethyl modification enzyme MnmG, found in Psychromonas ingrahamii (strain DSM 17664 / CCUG 51855 / 37).